A 506-amino-acid polypeptide reads, in one-letter code: Maturase K (506 aa).

It belongs to the intron maturase 2 family. MatK subfamily.

It is found in the plastid. Its subcellular location is the chloroplast. Functionally, usually encoded in the trnK tRNA gene intron. Probably assists in splicing its own and other chloroplast group II introns. The chain is Maturase K from Atractylodes lancea (Atractylodes japonica).